Here is a 99-residue protein sequence, read N- to C-terminus: Protein Tat (99 aa).

A disordered region spans residues 1–20; sequence MELVDPNLDPWNHPGSQPTT. The tract at residues 1–24 is interaction with human CREBBP; that stretch reads MELVDPNLDPWNHPGSQPTTPCTR. The tract at residues 1–48 is transactivation; that stretch reads MELVDPNLDPWNHPGSQPTTPCTRCYCKWCCFHCYWCFTTKGLGISYG. Zn(2+) is bound by residues Cys-22, Cys-25, and Cys-27. The segment at 22–37 is cysteine-rich; sequence CTRCYCKWCCFHCYWC. Lys-28 is subject to N6-acetyllysine; by host PCAF. Cys-30, His-33, Cys-34, and Cys-37 together coordinate Zn(2+). A core region spans residues 38 to 48; sequence FTTKGLGISYG. The interval 48 to 99 is disordered; sequence GRKKRRQRPRTPQSSQIHQDFVPKQPISQARGNPTGPKESKKEVESKAKTDP. Positions 49-57 match the Nuclear localization signal, RNA-binding (TAR), and protein transduction motif; sequence RKKRRQRPR. The interval 49 to 86 is interaction with the host capping enzyme RNGTT; that stretch reads RKKRRQRPRTPQSSQIHQDFVPKQPISQARGNPTGPKE. 2 positions are modified to N6-acetyllysine; by host EP300 and GCN5L2: Lys-50 and Lys-51. 2 positions are modified to asymmetric dimethylarginine; by host PRMT6: Arg-52 and Arg-53. Lys-71 is covalently cross-linked (Glycyl lysine isopeptide (Lys-Gly) (interchain with G-Cter in ubiquitin)). Over residues 85 to 99 the composition is skewed to basic and acidic residues; sequence KESKKEVESKAKTDP.

It belongs to the lentiviruses Tat family. As to quaternary structure, interacts with host CCNT1. Associates with the P-TEFb complex composed at least of Tat, P-TEFb (CDK9 and CCNT1), TAR RNA, RNA Pol II. Recruits the HATs CREBBP, TAF1/TFIID, EP300, PCAF and GCN5L2. Interacts with host KAT5/Tip60; this interaction targets the latter to degradation. Interacts with the host deacetylase SIRT1. Interacts with host capping enzyme RNGTT; this interaction stimulates RNGTT. Binds to host KDR, and to the host integrins ITGAV/ITGB3 and ITGA5/ITGB1. Interacts with host KPNB1/importin beta-1 without previous binding to KPNA1/importin alpha-1. Interacts with EIF2AK2. Interacts with host nucleosome assembly protein NAP1L1; this interaction may be required for the transport of Tat within the nucleus, since the two proteins interact at the nuclear rim. Interacts with host C1QBP/SF2P32; this interaction involves lysine-acetylated Tat. Interacts with the host chemokine receptors CCR2, CCR3 and CXCR4. Interacts with host DPP4/CD26; this interaction may trigger an anti-proliferative effect. Interacts with host LDLR. Interacts with the host extracellular matrix metalloproteinase MMP1. Interacts with host PRMT6; this interaction mediates Tat's methylation. Interacts with, and is ubiquitinated by MDM2/Hdm2. Interacts with host PSMC3 and HTATIP2. Interacts with STAB1; this interaction may overcome SATB1-mediated repression of IL2 and IL2RA (interleukin) in T cells by binding to the same domain than HDAC1. Interacts (when acetylated) with human CDK13, thereby increasing HIV-1 mRNA splicing and promoting the production of the doubly spliced HIV-1 protein Nef. Interacts with host TBP; this interaction modulates the activity of transcriptional pre-initiation complex. Interacts with host RELA. Interacts with host PLSCR1; this interaction negatively regulates Tat transactivation activity by altering its subcellular distribution. Asymmetrical arginine methylation by host PRMT6 seems to diminish the transactivation capacity of Tat and affects the interaction with host CCNT1. In terms of processing, acetylation by EP300, CREBBP, GCN5L2/GCN5 and PCAF regulates the transactivation activity of Tat. EP300-mediated acetylation of Lys-50 promotes dissociation of Tat from the TAR RNA through the competitive binding to PCAF's bromodomain. In addition, the non-acetylated Tat's N-terminus can also interact with PCAF. PCAF-mediated acetylation of Lys-28 enhances Tat's binding to CCNT1. Lys-50 is deacetylated by SIRT1. Post-translationally, polyubiquitination by host MDM2 does not target Tat to degradation, but activates its transactivation function and fosters interaction with CCNT1 and TAR RNA. Phosphorylated by EIF2AK2 on serine and threonine residues adjacent to the basic region important for TAR RNA binding and function. Phosphorylation of Tat by EIF2AK2 is dependent on the prior activation of EIF2AK2 by dsRNA.

The protein resides in the host nucleus. The protein localises to the host nucleolus. Its subcellular location is the host cytoplasm. It localises to the secreted. Transcriptional activator that increases RNA Pol II processivity, thereby increasing the level of full-length viral transcripts. Recognizes a hairpin structure at the 5'-LTR of the nascent viral mRNAs referred to as the transactivation responsive RNA element (TAR) and recruits the cyclin T1-CDK9 complex (P-TEFb complex) that will in turn hyperphosphorylate the RNA polymerase II to allow efficient elongation. The CDK9 component of P-TEFb and other Tat-activated kinases hyperphosphorylate the C-terminus of RNA Pol II that becomes stabilized and much more processive. Other factors such as HTATSF1/Tat-SF1, SUPT5H/SPT5, and HTATIP2 are also important for Tat's function. Besides its effect on RNA Pol II processivity, Tat induces chromatin remodeling of proviral genes by recruiting the histone acetyltransferases (HATs) CREBBP, EP300 and PCAF to the chromatin. This also contributes to the increase in proviral transcription rate, especially when the provirus integrates in transcriptionally silent region of the host genome. To ensure maximal activation of the LTR, Tat mediates nuclear translocation of NF-kappa-B by interacting with host RELA. Through its interaction with host TBP, Tat may also modulate transcription initiation. Tat can reactivate a latently infected cell by penetrating in it and transactivating its LTR promoter. In the cytoplasm, Tat is thought to act as a translational activator of HIV-1 mRNAs. Its function is as follows. Extracellular circulating Tat can be endocytosed by surrounding uninfected cells via the binding to several surface receptors such as CD26, CXCR4, heparan sulfate proteoglycans (HSPG) or LDLR. Neurons are rarely infected, but they internalize Tat via their LDLR. Through its interaction with nuclear HATs, Tat is potentially able to control the acetylation-dependent cellular gene expression. Modulates the expression of many cellular genes involved in cell survival, proliferation or in coding for cytokines or cytokine receptors. Tat plays a role in T-cell and neurons apoptosis. Tat induced neurotoxicity and apoptosis probably contribute to neuroAIDS. Circulating Tat also acts as a chemokine-like and/or growth factor-like molecule that binds to specific receptors on the surface of the cells, affecting many cellular pathways. In the vascular system, Tat binds to ITGAV/ITGB3 and ITGA5/ITGB1 integrins dimers at the surface of endothelial cells and competes with bFGF for heparin-binding sites, leading to an excess of soluble bFGF. The sequence is that of Protein Tat from Homo sapiens (Human).